The primary structure comprises 249 residues: Probable transcriptional regulatory protein ACIAD2052 (249 aa).

This sequence belongs to the TACO1 family.

The protein resides in the cytoplasm. This is Probable transcriptional regulatory protein ACIAD2052 from Acinetobacter baylyi (strain ATCC 33305 / BD413 / ADP1).